The chain runs to 444 residues: Glutamate-1-semialdehyde 2,1-aminomutase (444 aa).

At K278 the chain carries N6-(pyridoxal phosphate)lysine.

The protein belongs to the class-III pyridoxal-phosphate-dependent aminotransferase family. HemL subfamily. Homodimer. Requires pyridoxal 5'-phosphate as cofactor.

The protein resides in the cytoplasm. It catalyses the reaction (S)-4-amino-5-oxopentanoate = 5-aminolevulinate. The protein operates within porphyrin-containing compound metabolism; protoporphyrin-IX biosynthesis; 5-aminolevulinate from L-glutamyl-tRNA(Glu): step 2/2. In Deinococcus radiodurans (strain ATCC 13939 / DSM 20539 / JCM 16871 / CCUG 27074 / LMG 4051 / NBRC 15346 / NCIMB 9279 / VKM B-1422 / R1), this protein is Glutamate-1-semialdehyde 2,1-aminomutase.